The chain runs to 264 residues: Aminoglycoside 3'-phosphotransferase (264 aa).

Asp190 (proton acceptor) is an active-site residue.

The protein belongs to the aminoglycoside phosphotransferase family.

It carries out the reaction kanamycin A + ATP = kanamycin 3'-phosphate + ADP + H(+). Its function is as follows. Resistance to kanamycin and structurally-related aminoglycosides, including amikacin. This Enterococcus faecalis (Streptococcus faecalis) protein is Aminoglycoside 3'-phosphotransferase (aphA).